The chain runs to 619 residues: MPAYRSKTSTAGRNMAGARSLWRATGMKDEDFSKPIIAVVNSFTQFVPGHVHLKDLGQLVAREIEAAGGVAKEFNTIAVDDGIAMGHDGMLYSLPSRDIIADSVEYMVNAHCADAMVCISNCDKITPGMLMAAMRLNIPVVFVSGGPMEAGKTRLANPVTKTIEFKKLDLVDAMVIAADDKYSDADVAEVERSACPTCGSCSGMFTANSMNCLTEALGLSLPGNGTVVATHADREQLFKRAGRRIVELARRYYEQDDERVLPRSVGFKAFENAMTLDIAMGGSTNTILHLLAIAQEAGIDFTMADIDRLSRVVPQLCKVAPNTNKYHIEDVHRAGGIMAILGELDRAGRLHTDAPTVHAPTLGDALAQWDITRTQDEAVRHFYMAGPAGIPTQVAFSQNTRWPSLDLDRAEGCIRSVEHAFSKEGGLAVLRGNIALDGCVVKTAGVDESIHVFEGTAHVTESQDEAVENILADKVKAGDIVIVRYEGPKGGPGMQEMLYPTSYIKSKGLGKACALLTDGRFSGGTSGLSIGHCSPEAAAGGAIGLVQNGDRIRIDIPNRTIDVLVSDEELARRRAEQDAKGWKPAKPRPRKVSAALKAYAKLVMSADKGAVRDLSLLDD.

D81 lines the Mg(2+) pocket. C122 lines the [2Fe-2S] cluster pocket. Residues D123 and K124 each coordinate Mg(2+). K124 carries the post-translational modification N6-carboxylysine. [2Fe-2S] cluster is bound at residue C201. E496 is a Mg(2+) binding site. S522 acts as the Proton acceptor in catalysis.

Belongs to the IlvD/Edd family. As to quaternary structure, homodimer. [2Fe-2S] cluster is required as a cofactor. It depends on Mg(2+) as a cofactor.

It catalyses the reaction (2R)-2,3-dihydroxy-3-methylbutanoate = 3-methyl-2-oxobutanoate + H2O. It carries out the reaction (2R,3R)-2,3-dihydroxy-3-methylpentanoate = (S)-3-methyl-2-oxopentanoate + H2O. It participates in amino-acid biosynthesis; L-isoleucine biosynthesis; L-isoleucine from 2-oxobutanoate: step 3/4. The protein operates within amino-acid biosynthesis; L-valine biosynthesis; L-valine from pyruvate: step 3/4. Functionally, functions in the biosynthesis of branched-chain amino acids. Catalyzes the dehydration of (2R,3R)-2,3-dihydroxy-3-methylpentanoate (2,3-dihydroxy-3-methylvalerate) into 2-oxo-3-methylpentanoate (2-oxo-3-methylvalerate) and of (2R)-2,3-dihydroxy-3-methylbutanoate (2,3-dihydroxyisovalerate) into 2-oxo-3-methylbutanoate (2-oxoisovalerate), the penultimate precursor to L-isoleucine and L-valine, respectively. This is Dihydroxy-acid dehydratase from Paracidovorax citrulli (strain AAC00-1) (Acidovorax citrulli).